We begin with the raw amino-acid sequence, 439 residues long: Chitinase-like protein Idgf1 (439 aa).

The signal sequence occupies residues 1–20; sequence MRFQLFYILGLLSVTSLTQA. One can recognise a GH18 domain in the interval 22 to 439; that stretch reads NNLVCYYDST…IVRSIKYFMG (418 aa). The cysteines at positions 26 and 53 are disulfide-linked. Residues N122, N218, and N346 are each glycosylated (N-linked (GlcNAc...) asparagine). C340 and C423 are joined by a disulfide.

This sequence belongs to the glycosyl hydrolase 18 family. IDGF subfamily. Glycosylated.

It localises to the secreted. In terms of biological role, cooperates with insulin-like peptides to stimulate the proliferation, polarization and motility of imaginal disk cells. May act by stabilizing the binding of insulin-like peptides to its receptor through a simultaneous interaction with both molecules to form a multiprotein signaling complex. The chain is Chitinase-like protein Idgf1 (Idgf1) from Drosophila simulans (Fruit fly).